Here is a 194-residue protein sequence, read N- to C-terminus: MNLEALLDTVPAYARDLKLNFSAVVRQNTELTEQQLWGTVVACAAASRNRTLLDAIVEEAKGKLSAQAVEAAKGAAAILSMNNIFYRFQHLAVNKKYETMRAGLRMNFLRQHGVDPLDFELWALAVSAVNGCGKCIDAHERVLLQKEFSEEKILAAIRVASTIYGLAVVFDAEEPKGDLVGAPVNTDAYSTTTI.

Cys132 serves as the catalytic Proton donor. Cys132 and Cys135 are oxidised to a cystine. Cys135 acts as the Cysteine sulfenic acid (-SOH) intermediate in catalysis.

Belongs to the AhpD family.

The enzyme catalyses N(6)-[(R)-dihydrolipoyl]-L-lysyl-[lipoyl-carrier protein] + a hydroperoxide = N(6)-[(R)-lipoyl]-L-lysyl-[lipoyl-carrier protein] + an alcohol + H2O. Functionally, antioxidant protein with alkyl hydroperoxidase activity. Required for the reduction of the AhpC active site cysteine residues and for the regeneration of the AhpC enzyme activity. The polypeptide is Alkyl hydroperoxide reductase AhpD (Koribacter versatilis (strain Ellin345)).